Here is a 965-residue protein sequence, read N- to C-terminus: SKI family transcriptional corepressor 1 (965 aa).

6 disordered regions span residues 45 to 72 (TQLG…SSAL), 278 to 367 (RTFS…GGGA), 410 to 458 (DDPV…GGGA), 530 to 592 (SGAP…GSYV), 615 to 777 (AYGA…FAPE), and 796 to 843 (VCTP…EDGL). 3 stretches are compositionally biased toward gly residues: residues 283-312 (QGGG…GPGC), 356-367 (GPAGPGGPGGGA), and 418-442 (EPKG…GGPG). The segment covering 571–586 (LPPPLAPLPPPPPPPA) has biased composition (pro residues). The segment covering 620-632 (PARGPGPGAGSGG) has biased composition (gly residues). Over residues 641 to 650 (EGSSSYNSAS) the composition is skewed to polar residues. Composition is skewed to acidic residues over residues 654-663 (DTADEPEVDV) and 670-679 (DDEDAQEETE). Basic and acidic residues predominate over residues 800-823 (EAHEPDKEDNHSPADDLETRKSYP). Positions 824–835 (DQRSISQPSPAN) are enriched in polar residues. Residues 858-922 (ENLAREELQK…DTLCNELDQE (65 aa)) are a coiled coil.

The protein belongs to the SKI family. Interacts with LBX1. Interacts with SMAD1, SMAD2 and SMAD3. Present specifically in cerebellar Purkinje cells (at protein level).

It is found in the nucleus. Acts as a transcriptional corepressor of LBX1. Inhibits BMP signaling. In Homo sapiens (Human), this protein is SKI family transcriptional corepressor 1 (SKOR1).